The following is a 408-amino-acid chain: Imidazolonepropionase (408 aa).

Fe(3+)-binding residues include His-73 and His-75. Zn(2+) contacts are provided by His-73 and His-75. The 4-imidazolone-5-propanoate site is built by Arg-82, Tyr-145, and His-178. Position 145 (Tyr-145) interacts with N-formimidoyl-L-glutamate. His-243 provides a ligand contact to Fe(3+). His-243 lines the Zn(2+) pocket. Gln-246 is a 4-imidazolone-5-propanoate binding site. Asp-318 provides a ligand contact to Fe(3+). Asp-318 provides a ligand contact to Zn(2+). Residues Asn-320 and Gly-322 each contribute to the N-formimidoyl-L-glutamate site. Ser-323 provides a ligand contact to 4-imidazolone-5-propanoate.

The protein belongs to the metallo-dependent hydrolases superfamily. HutI family. Zn(2+) serves as cofactor. The cofactor is Fe(3+).

The protein resides in the cytoplasm. It catalyses the reaction 4-imidazolone-5-propanoate + H2O = N-formimidoyl-L-glutamate. Its pathway is amino-acid degradation; L-histidine degradation into L-glutamate; N-formimidoyl-L-glutamate from L-histidine: step 3/3. Functionally, catalyzes the hydrolytic cleavage of the carbon-nitrogen bond in imidazolone-5-propanoate to yield N-formimidoyl-L-glutamate. It is the third step in the universal histidine degradation pathway. The polypeptide is Imidazolonepropionase (Shewanella sp. (strain MR-4)).